The chain runs to 56 residues: PI-stichotoxin-Hmg3a (56 aa).

The BPTI/Kunitz inhibitor domain occupies 4–54 (CLEPKVVGPCKARIRRFYYDSETGKCTPFIYGGCGGNGNNFETLHACRGIC). 3 disulfide bridges follow: Cys4-Cys54, Cys13-Cys37, and Cys29-Cys50.

It belongs to the venom Kunitz-type family. Sea anemone type 2 potassium channel toxin subfamily. In terms of processing, contains three disulfide bonds.

It is found in the secreted. The protein resides in the nematocyst. Serine protease inhibitor that inhibits trypsin (Ki=50 nM) and probably also chymotrypsin (Kd=1.6 nM). Has an anti-inflammatory effect in LPS-activated macrophages in vitro, specifically reducing release of TNF and IL6 but not nitric oxide and reducing expression of IL1B precursor. The chain is PI-stichotoxin-Hmg3a from Heteractis magnifica (Magnificent sea anemone).